The primary structure comprises 86 residues: DNA replication protein 1 (86 aa).

Positions 38 to 67 (LELEKKMTKLEHENKLMKNALYELSRMENN) form a coiled coil.

This sequence belongs to the phi29likevirus DNA replication protein 1 family. In terms of assembly, homomultimer. Self-associates into large complexes forming long filamentous structures. Interacts (via N-terminus) with the primer terminal protein. Interacts with host FtsZ protein.

It is found in the host membrane. Protein that assembles into highly ordered structures and provides a specific site for viral DNA replication. Probably anchors the viral DNA replisome to the host membrane. The sequence is that of DNA replication protein 1 (1) from Bacillus subtilis (Bacteriophage phi-29).